The sequence spans 153 residues: Aspartate carbamoyltransferase regulatory chain (153 aa).

The Zn(2+) site is built by Cys109, Cys114, Cys138, and Cys141.

The protein belongs to the PyrI family. As to quaternary structure, contains catalytic and regulatory chains. The cofactor is Zn(2+).

Functionally, involved in allosteric regulation of aspartate carbamoyltransferase. The sequence is that of Aspartate carbamoyltransferase regulatory chain from Enterobacter sp. (strain 638).